Consider the following 616-residue polypeptide: Homeodomain-interacting protein kinase 4 (616 aa).

The region spanning Y11–V347 is the Protein kinase domain. ATP contacts are provided by residues L17–V25 and K40. D136 (proton acceptor) is an active-site residue. Residues H486–H616 are disordered. A compositionally biased stretch (polar residues) spans K496–S511. Position 511 is a phosphoserine (S511).

It belongs to the protein kinase superfamily. CMGC Ser/Thr protein kinase family. HIPK subfamily. Post-translationally, autophosphorylated.

The protein localises to the cytoplasm. It catalyses the reaction L-seryl-[protein] + ATP = O-phospho-L-seryl-[protein] + ADP + H(+). It carries out the reaction L-threonyl-[protein] + ATP = O-phospho-L-threonyl-[protein] + ADP + H(+). Functionally, protein kinase that phosphorylates human TP53 at Ser-9, and thus induces TP53 repression of BIRC5 promoter. May act as a corepressor of transcription factors (Potential). The polypeptide is Homeodomain-interacting protein kinase 4 (HIPK4) (Homo sapiens (Human)).